The following is a 229-amino-acid chain: MSQPRPLLSPPETEEQLLAQAQQLSGYTLGELAALAGLVTPENLKRDKGWIGVLLEIWLGASAGSKPEQDFAALGVELKTIPVDSLGRPLETTFVCVAPLTGNSGVTWETSHVRHKLKRVLWIPVEGERSIPLAQRRVGSPLLWSPNEEEDRQLREDWEELMDMIVLGQVERITARHGEYLQIRPKAANAKALTEAIGARGERILTLPRGFYLKKNFTSALLARHFLIQ.

It belongs to the MutH family.

The protein resides in the cytoplasm. Functionally, sequence-specific endonuclease that cleaves unmethylated GATC sequences. It is involved in DNA mismatch repair. The polypeptide is DNA mismatch repair protein MutH (Shigella dysenteriae serotype 1 (strain Sd197)).